Consider the following 338-residue polypeptide: Sporulation protein YdcC (338 aa).

A helical membrane pass occupies residues Phe-8–Gly-25.

The protein localises to the cell membrane. In terms of biological role, required for efficient sporulation. The chain is Sporulation protein YdcC (ydcC) from Bacillus subtilis (strain 168).